A 648-amino-acid polypeptide reads, in one-letter code: NAD(P)H-quinone oxidoreductase subunit 5, chloroplastic (648 aa).

16 consecutive transmembrane segments (helical) span residues 7 to 27, 39 to 59, 89 to 109, 124 to 144, 147 to 167, 189 to 209, 215 to 235, 258 to 278, 289 to 309, 327 to 347, 354 to 374, 395 to 415, 432 to 452, 472 to 492, 518 to 538, and 625 to 645; these read AIWLIPVLPLSASMLSGIGLL, LHGALAIGAMALSFVVSLGVL, VDPLTSTMLVVVTSVALLVMI, FFVYLSIFTTSMLGLVLSPNL, VYGFWELVGMCSYLLVGFWFT, LLLGILALYWMTGSFEFASIA, LLIAIPSLRTIACIACILVFM, TPISALIHAATMVAAGVFLVA, LVMELIAWTGTLTAFLGATMA, LGYMIMALGTGAYSEALFHLT, ALLFLAAGSVIHGMEPVVGFS, AMTFLLGTCSICGIPPLACFW, WLIAWLTAGMTGFYMFRIYFL, LGMVAPLIILAIPTVAIGSLG, LAEFLEMAGSSVGIGLLGISL, and FYILSIIFGVLFGSWLLTTHL.

It belongs to the complex I subunit 5 family. In terms of assembly, NDH is composed of at least 16 different subunits, 5 of which are encoded in the nucleus.

It localises to the plastid. Its subcellular location is the chloroplast thylakoid membrane. It catalyses the reaction a plastoquinone + NADH + (n+1) H(+)(in) = a plastoquinol + NAD(+) + n H(+)(out). It carries out the reaction a plastoquinone + NADPH + (n+1) H(+)(in) = a plastoquinol + NADP(+) + n H(+)(out). NDH shuttles electrons from NAD(P)H:plastoquinone, via FMN and iron-sulfur (Fe-S) centers, to quinones in the photosynthetic chain and possibly in a chloroplast respiratory chain. The immediate electron acceptor for the enzyme in this species is believed to be plastoquinone. Couples the redox reaction to proton translocation, and thus conserves the redox energy in a proton gradient. This Nephroselmis olivacea (Green alga) protein is NAD(P)H-quinone oxidoreductase subunit 5, chloroplastic (ndhF).